Here is a 1002-residue protein sequence, read N- to C-terminus: DNA-directed RNA polymerase 1B, mitochondrial (1002 aa).

Residues 1–21 (MWRYISKHAYSRKFRNSHDSA) constitute a mitochondrion transit peptide. Catalysis depends on residues aspartate 703, lysine 778, and aspartate 935.

This sequence belongs to the phage and mitochondrial RNA polymerase family.

It localises to the mitochondrion. It carries out the reaction RNA(n) + a ribonucleoside 5'-triphosphate = RNA(n+1) + diphosphate. Its function is as follows. DNA-dependent RNA polymerase catalyzes the transcription of DNA into RNA using the four ribonucleoside triphosphates as substrates. The polypeptide is DNA-directed RNA polymerase 1B, mitochondrial (RPOT1-TOM) (Nicotiana tabacum (Common tobacco)).